Consider the following 192-residue polypeptide: Dynein axonemal light chain 1 (192 aa).

LRR repeat units follow at residues N49–K70, Y71–G92, T94–K115, and K116–G137. Residues N150–S192 form the LRRCT domain.

The protein belongs to the dynein light chain LC1-type family. Interacts with DNAH5, a outer arm dynein heavy chain. Interacts with tubulin located within the A-tubule of the outer doublets in a ATP-independent manner.

It is found in the cytoplasm. The protein resides in the cytoskeleton. It localises to the cilium axoneme. Its function is as follows. Part of the multisubunit axonemal ATPase complexes that generate the force for cilia motility and govern beat frequency. Component of the outer arm dynein (ODA). May be involved in a mechanosensory feedback mechanism controlling ODA activity based on external conformational cues by tethering the outer arm dynein heavy chain (DNAH5) to the microtubule within the axoneme. The sequence is that of Dynein axonemal light chain 1 (dnal1) from Xenopus laevis (African clawed frog).